The primary structure comprises 606 residues: Radial spoke head protein 3 homolog (606 aa).

The segment at Met-1 to Gly-103 is disordered. The segment covering Pro-15 to Arg-46 has biased composition (basic and acidic residues). Thr-331 is subject to Phosphothreonine; by MAPK1. A coiled-coil region spans residues Ala-393–Val-429. Positions Glu-520–Gln-606 are disordered. Residues Ser-547–Gln-556 are compositionally biased toward polar residues. Positions Ala-572–Leu-604 form a coiled coil. Basic and acidic residues predominate over residues Arg-573–Gln-606.

This sequence belongs to the flagellar radial spoke RSP3 family. Component of the axonemal radial spoke 1 (RS1) and 2 (RS2) complexes, at least composed of spoke head proteins RSPH1, RSPH3, RSPH9 and the cilia-specific component RSPH4A or sperm-specific component RSPH6A, spoke stalk proteins RSPH14, DNAJB13, DYDC1, ROPN1L and NME5, and the RS1 complex-specific anchor protein IQUB. Interacts with IQUB. Interacts with phosphorylated MAPK1. Interacts with MEK1. Interacts with PKA regulatory subunits PRKAR1A and PRKAR1B. Interacts with RSPH1. Interacts with RSPH4A. Interacts with RSPH6A. Interacts with RSPH9. Interacts with LRRC23.

The protein resides in the cytoplasm. Its subcellular location is the cytoskeleton. The protein localises to the cilium axoneme. It localises to the flagellum axoneme. Functionally, functions as part of axonemal radial spoke complexes that play an important part in the motility of sperm and cilia. Functions as a protein kinase A-anchoring protein that scaffolds the cAMP-dependent protein kinase holoenzyme. May serve as a point of convergence for MAPK and PKA signaling in cilia. The protein is Radial spoke head protein 3 homolog (RSPH3) of Bos taurus (Bovine).